A 618-amino-acid polypeptide reads, in one-letter code: Dihydroxy-acid dehydratase (618 aa).

A Mg(2+)-binding site is contributed by Asp81. Cys122 is a [2Fe-2S] cluster binding site. Mg(2+) is bound by residues Asp123 and Lys124. The residue at position 124 (Lys124) is an N6-carboxylysine. [2Fe-2S] cluster is bound at residue Cys195. Glu491 contacts Mg(2+). Ser517 functions as the Proton acceptor in the catalytic mechanism.

It belongs to the IlvD/Edd family. In terms of assembly, homodimer. [2Fe-2S] cluster is required as a cofactor. It depends on Mg(2+) as a cofactor.

It carries out the reaction (2R)-2,3-dihydroxy-3-methylbutanoate = 3-methyl-2-oxobutanoate + H2O. The catalysed reaction is (2R,3R)-2,3-dihydroxy-3-methylpentanoate = (S)-3-methyl-2-oxopentanoate + H2O. It functions in the pathway amino-acid biosynthesis; L-isoleucine biosynthesis; L-isoleucine from 2-oxobutanoate: step 3/4. It participates in amino-acid biosynthesis; L-valine biosynthesis; L-valine from pyruvate: step 3/4. Its function is as follows. Functions in the biosynthesis of branched-chain amino acids. Catalyzes the dehydration of (2R,3R)-2,3-dihydroxy-3-methylpentanoate (2,3-dihydroxy-3-methylvalerate) into 2-oxo-3-methylpentanoate (2-oxo-3-methylvalerate) and of (2R)-2,3-dihydroxy-3-methylbutanoate (2,3-dihydroxyisovalerate) into 2-oxo-3-methylbutanoate (2-oxoisovalerate), the penultimate precursor to L-isoleucine and L-valine, respectively. This Rhodopseudomonas palustris (strain TIE-1) protein is Dihydroxy-acid dehydratase.